The following is a 272-amino-acid chain: S-adenosylmethionine decarboxylase proenzyme (272 aa).

Serine 122 serves as the catalytic Schiff-base intermediate with substrate; via pyruvic acid. The residue at position 122 (serine 122) is a Pyruvic acid (Ser); by autocatalysis. Catalysis depends on histidine 127, which acts as the Proton acceptor; for processing activity. The active-site Proton donor; for catalytic activity is the cysteine 150.

This sequence belongs to the prokaryotic AdoMetDC family. Type 2 subfamily. Heterooctamer of four alpha and four beta chains arranged as a tetramer of alpha/beta heterodimers. Requires pyruvate as cofactor. Is synthesized initially as an inactive proenzyme. Formation of the active enzyme involves a self-maturation process in which the active site pyruvoyl group is generated from an internal serine residue via an autocatalytic post-translational modification. Two non-identical subunits are generated from the proenzyme in this reaction, and the pyruvate is formed at the N-terminus of the alpha chain, which is derived from the carboxyl end of the proenzyme. The post-translation cleavage follows an unusual pathway, termed non-hydrolytic serinolysis, in which the side chain hydroxyl group of the serine supplies its oxygen atom to form the C-terminus of the beta chain, while the remainder of the serine residue undergoes an oxidative deamination to produce ammonia and the pyruvoyl group blocking the N-terminus of the alpha chain.

The enzyme catalyses S-adenosyl-L-methionine + H(+) = S-adenosyl 3-(methylsulfanyl)propylamine + CO2. It functions in the pathway amine and polyamine biosynthesis; S-adenosylmethioninamine biosynthesis; S-adenosylmethioninamine from S-adenosyl-L-methionine: step 1/1. Functionally, catalyzes the decarboxylation of S-adenosylmethionine to S-adenosylmethioninamine (dcAdoMet), the propylamine donor required for the synthesis of the polyamines spermine and spermidine from the diamine putrescine. This is S-adenosylmethionine decarboxylase proenzyme from Clostridium botulinum (strain Alaska E43 / Type E3).